We begin with the raw amino-acid sequence, 432 residues long: D-amino acid dehydrogenase (432 aa).

Residue V3–W17 participates in FAD binding.

Belongs to the DadA oxidoreductase family. The cofactor is FAD.

It carries out the reaction a D-alpha-amino acid + A + H2O = a 2-oxocarboxylate + AH2 + NH4(+). It participates in amino-acid degradation; D-alanine degradation; NH(3) and pyruvate from D-alanine: step 1/1. Functionally, oxidative deamination of D-amino acids. This Citrobacter koseri (strain ATCC BAA-895 / CDC 4225-83 / SGSC4696) protein is D-amino acid dehydrogenase.